The following is a 54-amino-acid chain: uncharacterized protein (54 aa).

Residues serine 21–valine 43 form a helical membrane-spanning segment.

It localises to the membrane. This is an uncharacterized protein from Saccharomyces cerevisiae (strain ATCC 204508 / S288c) (Baker's yeast).